The chain runs to 182 residues: Vacuolar protein sorting-associated protein 29 (182 aa).

Position 50 is an N6-acetyllysine (Lys50).

This sequence belongs to the VPS29 family. In terms of assembly, component of the commander complex consisting of the CCC subcomplex and the retriever subcomplex. Component of the heterotrimeric retriever complex formed by VPS26C, VPS29 and VPS35L; within the complex interacts with VPS35L. Component of the heterotrimeric retromer cargo-selective complex (CSC), also described as vacuolar protein sorting subcomplex (VPS) formed by VPS26 (VPS26A or VPS26B), VPS29 and VPS35. The CSC has a highly elongated structure with VPS26 and VPS29 binding independently at opposite distal ends of VPS35 as central platform. The CSC is believed to associate with variable sorting nexins to form functionally distinct retromer complex variants. The originally described retromer complex (also called SNX-BAR retromer) is a pentamer containing the CSC and a heterodimeric membrane-deforming subcomplex formed between SNX1 or SNX2 and SNX5 or SNX6 (also called SNX-BAR subcomplex); the respective CSC and SNX-BAR subcomplexes associate with low affinity. The CSC associates with SNX3 to form a SNX3-retromer complex. The CSC associates with SNX27, the WASH complex and the SNX-BAR subcomplex to form the SNX27-retromer complex. Interacts with VPS26A, VPS35, SNX1, SNX2, SNX3, SNX27, WASHC5. Interacts with TBC1D5; this interaction is blocked by VPS35L in the retriever complex. Interacts with SNX17; the interaction is indirect; SNX17 (via its C-terminus) interacts with the retriever complex (via VPS26C and VPS35L). Interacts with VPS26B and ANKRD27.

It is found in the cytoplasm. The protein resides in the membrane. It localises to the endosome membrane. Functionally, component of the commander complex that is essential for endosomal recycling of transmembrane cargos; the commander complex is composed of the CCC subcomplex and the retriever subcomplex. Component of the retriever complex, which is a heterotrimeric complex related to retromer cargo-selective complex (CSC) and essential for retromer-independent retrieval and recycling of numerous cargos such as integrin alpha-5/beta-1 (ITGA5:ITGB1). Component of the retromer cargo-selective complex (CSC). The CSC is believed to be the core functional component of retromer or respective retromer complex variants acting to prevent missorting of selected transmembrane cargo proteins into the lysosomal degradation pathway. The recruitment of the CSC to the endosomal membrane involves RAB7A and SNX3. The SNX-BAR retromer mediates retrograde transport of cargo proteins from endosomes to the trans-Golgi network (TGN) and is involved in endosome-to-plasma membrane transport for cargo protein recycling. The SNX3-retromer mediates the retrograde endosome-to-TGN transport of WLS distinct from the SNX-BAR retromer pathway. The SNX27-retromer is believed to be involved in endosome-to-plasma membrane trafficking and recycling of a broad spectrum of cargo proteins. The CSC seems to act as recruitment hub for other proteins, such as the WASH complex and TBC1D5. Required to regulate transcytosis of the polymeric immunoglobulin receptor (pIgR-pIgA). In the endosomes, retriever complex drives the retrieval and recycling of NxxY-motif-containing cargo proteins by coupling to SNX17, a cargo essential for the homeostatic maintenance of numerous cell surface proteins associated with processes that include cell migration, cell adhesion, nutrient supply and cell signaling. The recruitment of the retriever complex to the endosomal membrane involves CCC and WASH complexes. Involved in GLUT1 endosome-to-plasma membrane trafficking; the function is dependent of association with ANKRD27. The protein is Vacuolar protein sorting-associated protein 29 (Vps29) of Mus musculus (Mouse).